The following is a 61-amino-acid chain: UPF0434 protein Nmul_A1027 (61 aa).

The protein belongs to the UPF0434 family.

The polypeptide is UPF0434 protein Nmul_A1027 (Nitrosospira multiformis (strain ATCC 25196 / NCIMB 11849 / C 71)).